Consider the following 311-residue polypeptide: MNKYDLIERMNTRFAELEVTLHQLHQQLDDLPLIAARVFSLPEIEKGTEHQPIEQITVNITEGEHAKRLGLQHFQRLFLHHQGQHVSSKAALRLPGVLCFSVTDKELIECQDIIKKTNQLKAELEHIITVESGLPSEQRFEFVHTHLHGLITLNTYRTITPLINPSSVRFGWANKHIIKNVTREDILLQLEKSLNAGRAVPPFTREQWRELISLEINDVQRLPEKTRLKIKRPVKVQPIARVWYQEQQKQVQHPCPMPLIAFCQRQSGAELPKLGELTDYDVKHIKHKYKPDAKPLRLLVPRLHLYVELEP.

It belongs to the Tus family.

The protein resides in the cytoplasm. Trans-acting protein required for termination of DNA replication. Binds to DNA replication terminator sequences (terA to terF) to prevent the passage of replication forks. The termination efficiency will be affected by the affinity of this protein for the terminator sequence. This Yersinia pseudotuberculosis serotype I (strain IP32953) protein is DNA replication terminus site-binding protein.